The primary structure comprises 702 residues: Ribosomal RNA large subunit methyltransferase K/L (702 aa).

A THUMP domain is found at 43–154 (LVYQSLMWSR…KETASIALDL (112 aa)).

It belongs to the methyltransferase superfamily. RlmKL family.

The protein localises to the cytoplasm. The enzyme catalyses guanosine(2445) in 23S rRNA + S-adenosyl-L-methionine = N(2)-methylguanosine(2445) in 23S rRNA + S-adenosyl-L-homocysteine + H(+). The catalysed reaction is guanosine(2069) in 23S rRNA + S-adenosyl-L-methionine = N(2)-methylguanosine(2069) in 23S rRNA + S-adenosyl-L-homocysteine + H(+). Specifically methylates the guanine in position 2445 (m2G2445) and the guanine in position 2069 (m7G2069) of 23S rRNA. This is Ribosomal RNA large subunit methyltransferase K/L from Shigella boydii serotype 18 (strain CDC 3083-94 / BS512).